A 306-amino-acid chain; its full sequence is Acetaldehyde dehydrogenase 3 (306 aa).

Catalysis depends on C131, which acts as the Acyl-thioester intermediate. NAD(+)-binding positions include 162–170 (SVGPGTRKN) and N273.

This sequence belongs to the acetaldehyde dehydrogenase family.

The enzyme catalyses acetaldehyde + NAD(+) + CoA = acetyl-CoA + NADH + H(+). The sequence is that of Acetaldehyde dehydrogenase 3 from Burkholderia lata (strain ATCC 17760 / DSM 23089 / LMG 22485 / NCIMB 9086 / R18194 / 383).